A 146-amino-acid polypeptide reads, in one-letter code: Large ribosomal subunit protein uL13 (146 aa).

Belongs to the universal ribosomal protein uL13 family. In terms of assembly, part of the 50S ribosomal subunit.

In terms of biological role, this protein is one of the early assembly proteins of the 50S ribosomal subunit, although it is not seen to bind rRNA by itself. It is important during the early stages of 50S assembly. In Bdellovibrio bacteriovorus (strain ATCC 15356 / DSM 50701 / NCIMB 9529 / HD100), this protein is Large ribosomal subunit protein uL13.